A 408-amino-acid chain; its full sequence is MDTIKVLNNKNITDVPYFKAIGVASGIKGNNKSDLCVIYSEKPCIAAGTFTTNKVKAAPVLLDLKHIESENIYAIVANSGNANACTGDDGYEKAYLMAECTAKHLKIKPEEVLVASTGVIGVPLPIDKVMFGIEKAFSILPKSDANKAIDAIMTTDTVQKKIFVEFMLDKKKVTICAIAKGSGMIHPNMATMLSFIVTDANITKDLLNKALKESVKDSYNMISVDRDTSTNDMALLLANGASGNTLISSENSDYEVFKKALHYVNVEISKMIAKDGEGATKLIEAKVFGASSSRDAKVAAKSVITSNLVKAAVFGSDANWGRIICALGYSAAEIDPSKVDISFSNNDSKVETCLKGTGLNFDEEAAKKILDGDHVIIEVNLNNGKFNATAWGCDLTYDYVKINGSYRS.

T154, K180, T191, E277, N403, and S408 together coordinate substrate. T191 acts as the Nucleophile in catalysis.

The protein belongs to the ArgJ family. In terms of assembly, heterotetramer of two alpha and two beta chains.

Its subcellular location is the cytoplasm. The catalysed reaction is N(2)-acetyl-L-ornithine + L-glutamate = N-acetyl-L-glutamate + L-ornithine. It catalyses the reaction L-glutamate + acetyl-CoA = N-acetyl-L-glutamate + CoA + H(+). The protein operates within amino-acid biosynthesis; L-arginine biosynthesis; L-ornithine and N-acetyl-L-glutamate from L-glutamate and N(2)-acetyl-L-ornithine (cyclic): step 1/1. It functions in the pathway amino-acid biosynthesis; L-arginine biosynthesis; N(2)-acetyl-L-ornithine from L-glutamate: step 1/4. Its function is as follows. Catalyzes two activities which are involved in the cyclic version of arginine biosynthesis: the synthesis of N-acetylglutamate from glutamate and acetyl-CoA as the acetyl donor, and of ornithine by transacetylation between N(2)-acetylornithine and glutamate. This is Arginine biosynthesis bifunctional protein ArgJ 1 from Clostridium acetobutylicum (strain ATCC 824 / DSM 792 / JCM 1419 / IAM 19013 / LMG 5710 / NBRC 13948 / NRRL B-527 / VKM B-1787 / 2291 / W).